Reading from the N-terminus, the 220-residue chain is Claudin-3 (220 aa).

At methionine 1–threonine 8 the chain is on the cytoplasmic side. Residues glycine 9–tryptophan 29 traverse the membrane as a helical segment. Over arginine 30–arginine 80 the chain is Extracellular. Residues alanine 81–alanine 101 traverse the membrane as a helical segment. Over glutamine 102–lysine 115 the chain is Cytoplasmic. Residues isoleucine 116 to serine 136 traverse the membrane as a helical segment. The Extracellular segment spans residues tryptophan 137 to methionine 159. A helical transmembrane segment spans residues glycine 160 to leucine 180. Residues cysteine 181 to valine 220 are Cytoplasmic-facing. A Phosphotyrosine modification is found at tyrosine 198. Phosphoserine occurs at positions 199 and 209. The segment at tyrosine 219–valine 220 is interactions with TJP1, TJP2 and TJP3.

This sequence belongs to the claudin family. As to quaternary structure, can form homo- and heteropolymers with other CLDN. Homopolymers interact with CLDN1 and CLDN2 homopolymers. Interacts in cis (within the same plasma membrane) with CLDN19. Directly interacts with TJP1/ZO-1, TJP2/ZO-2 and TJP3/ZO-3.

Its subcellular location is the cell junction. The protein localises to the tight junction. It is found in the cell membrane. Barrier-forming claudin. Plays a major role in tight junction-specific obliteration of the intercellular space, through calcium-independent cell-adhesion activity. This chain is Claudin-3 (CLDN3), found in Homo sapiens (Human).